The following is a 506-amino-acid chain: NAD(P)H-quinone oxidoreductase chain 4, chloroplastic (506 aa).

14 consecutive transmembrane segments (helical) span residues 5 to 25 (FPLL…IPFL), 35 to 55 (WYTL…FIYK), 88 to 108 (MPLI…AWPI), 114 to 134 (LFYF…LSQD), 135 to 155 (ILLF…LLSL), 168 to 188 (FILY…TMAF), 209 to 229 (ALEI…LPAF), 243 to 263 (HYST…YGLI), 275 to 295 (VIFS…GALT), 309 to 329 (SSIS…DLGL), 331 to 351 (GAMM…FLAG), 386 to 406 (SLAL…LGFL), 415 to 435 (FIAL…IYLL), and 463 to 483 (IFIM…PNLT).

The protein belongs to the complex I subunit 4 family.

Its subcellular location is the plastid. It localises to the chloroplast thylakoid membrane. It carries out the reaction a plastoquinone + NADH + (n+1) H(+)(in) = a plastoquinol + NAD(+) + n H(+)(out). The enzyme catalyses a plastoquinone + NADPH + (n+1) H(+)(in) = a plastoquinol + NADP(+) + n H(+)(out). In Chaetosphaeridium globosum (Charophycean green alga), this protein is NAD(P)H-quinone oxidoreductase chain 4, chloroplastic.